The sequence spans 244 residues: Sperm-egg fusion protein Juno (244 aa).

The N-terminal stretch at 1–19 is a signal peptide; sequence MAQWWLILLGLWTVLPSLA. Disulfide bonds link cysteine 27–cysteine 55, cysteine 47–cysteine 95, cysteine 56–cysteine 99, cysteine 79–cysteine 166, cysteine 86–cysteine 137, cysteine 126–cysteine 200, cysteine 130–cysteine 180, and cysteine 143–cysteine 160. The tract at residues 62 to 81 is important for interaction with IZUMO1; sequence WEAHLDEPLLFNFSMTHCGL. Residue asparagine 73 is glycosylated (N-linked (GlcNAc...) asparagine). Residues 223–244 constitute a propeptide that is removed on maturation; it reads SASAPQLSYSITAFSLCLLLHA.

The protein belongs to the folate receptor family. Monomer. Interacts with IZUMO1; the interaction is direct. IZUMO1 and IZUMO1R/JUNO form a complex with 1:1 stoichiometry. Interacts with FCRL3/MAIA; FCRL3/MAIA replaces IZUMO1R/JUNO as IZUMO1 receptor after sperm-egg adhesion, thereby permitting species-specific gamete fusion. Interacts with WDR54. In terms of processing, the protein is rapidly cleaved following fertilization, being only weakly detectable in zona-intact fertilized eggs at telophase II and undetectable at the pronuclear stage. Sheding is probably required to block to polyspermy and ensuring egg fusion with a single sperm. As to expression, expressed in the oocyte (at protein level).

The protein resides in the cell membrane. It is found in the cell projection. Its subcellular location is the microvillus membrane. In terms of biological role, receptor for IZUMO1 present at the cell surface of oocytes (oolemma), which is essential for species-specific gamete recognition and fertilization. The IZUMO1:IZUMO1R/JUNO interaction is a necessary adhesion event between sperm and egg that is required for fertilization but is not sufficient for cell fusion. The ligand-receptor interaction probably does not act as a membrane 'fusogen'. Does not bind folate. The protein is Sperm-egg fusion protein Juno (Izumo1r) of Rattus norvegicus (Rat).